We begin with the raw amino-acid sequence, 223 residues long: Neurotrophic factor BDNF precursor form (223 aa).

The first 5 residues, 1-5 (SCMKA), serve as a signal peptide directing secretion. Positions 6-114 (APMKEVGVRG…AANMSXRVRR (109 aa)) are excised as a propeptide. Residue N107 is glycosylated (N-linked (GlcNAc...) asparagine). 2 disulfide bridges follow: C127/C194 and C172/C223.

The protein belongs to the NGF-beta family.

The protein resides in the secreted. Its function is as follows. Promotes the survival of neuronal populations that are all located either in the central nervous system or directly connected to it. The chain is Neurotrophic factor BDNF precursor form (BDNF) from Eryx jayakari (Arabian sand boa).